A 521-amino-acid chain; its full sequence is Zinc finger and BTB domain-containing protein 18 (521 aa).

The BTB domain occupies 24–91; that stretch reads CDCTVLVGDA…MYEGKLQFKD (68 aa). A disordered region spans residues 190–230; sequence DSASIPQTGGEAETHTAAAGKTADSPCSSTGSLSHRSATSM. Residues 197–212 are compositionally biased toward low complexity; that stretch reads TGGEAETHTAAAGKTA. Over residues 214-230 the composition is skewed to polar residues; it reads SPCSSTGSLSHRSATSM. 4 consecutive C2H2-type zinc fingers follow at residues 369-391, 409-431, 437-459, and 465-488; these read FMCP…LSTH, PTCS…ERTH, FTCT…AVVH, and HACK…RKFH.

It belongs to the krueppel C2H2-type zinc-finger protein family. ZBTB18 subfamily.

The protein localises to the nucleus. Functionally, transcriptional repressor that plays a role in various developmental processes. Specifically binds the consensus DNA sequence 5'-[AC]ACATCTG[GT][AC]-3' which contains the E box core, and acts by recruiting chromatin remodeling multiprotein complexes. The sequence is that of Zinc finger and BTB domain-containing protein 18 (zbtb18) from Xenopus tropicalis (Western clawed frog).